Consider the following 182-residue polypeptide: NADH-quinone oxidoreductase subunit B 2 (182 aa).

Residues Cys-47, Cys-48, Cys-113, and Cys-142 each contribute to the [4Fe-4S] cluster site.

It belongs to the complex I 20 kDa subunit family. In terms of assembly, NDH-1 is composed of 14 different subunits. Subunits NuoB, C, D, E, F, and G constitute the peripheral sector of the complex. Requires [4Fe-4S] cluster as cofactor.

It is found in the cell inner membrane. The catalysed reaction is a quinone + NADH + 5 H(+)(in) = a quinol + NAD(+) + 4 H(+)(out). Functionally, NDH-1 shuttles electrons from NADH, via FMN and iron-sulfur (Fe-S) centers, to quinones in the respiratory chain. The immediate electron acceptor for the enzyme in this species is believed to be ubiquinone. Couples the redox reaction to proton translocation (for every two electrons transferred, four hydrogen ions are translocated across the cytoplasmic membrane), and thus conserves the redox energy in a proton gradient. In Anaeromyxobacter sp. (strain K), this protein is NADH-quinone oxidoreductase subunit B 2.